The following is a 415-amino-acid chain: Membrane-bound ghrelin O-acyltransferase mboat4 (415 aa).

Over 1–6 (MIDLLW) the chain is Lumenal. Residues 7–28 (ISSDGHPQLFYQFINIPFAFLF) form a helical membrane-spanning segment. Residues 29-42 (HCLSSQGHLSIINR) lie on the Cytoplasmic side of the membrane. Residues 43–58 (YVYLAMGGFMLAIATM) form a helical membrane-spanning segment. The Lumenal segment spans residues 59 to 61 (GPY). A helical membrane pass occupies residues 62–78 (SSLLFLSAIKLLLLIHY). Over 79 to 84 (IHPMHL) the chain is Cytoplasmic. The chain crosses the membrane as a helical span at residues 85–103 (HRWILGLQMCWQTCWHLYV). Topologically, residues 104 to 122 (QYQIYWLQEAPDSRLLLAI) are lumenal. A helical membrane pass occupies residues 123-138 (SALMLMTQRISSLSLD). Residues 139–193 (FQEGTISNQSILIPFLTYSLYFPALLGGPLCSFNAFVQSVERQHTSMTSYLGNLT) are Cytoplasmic-facing. Residues 194–214 (SKISQVIVLVWIKQLFSELLK) form a helical membrane-spanning segment. Topologically, residues 215–227 (SATFNIDSVCLDV) are lumenal. Residues 228 to 247 (LWIWIFSLTLRLNYYAHWKM) traverse the membrane as a helical segment. The Cytoplasmic segment spans residues 248 to 312 (SECVNNAAGL…RKIVFNRTSR (65 aa)). Residues Asn-295 and His-326 contribute to the active site. Residues 313-326 (SPLFMTFGFSALWH) traverse the membrane as a helical segment. The Lumenal portion of the chain corresponds to 327–328 (GL). The chain crosses the membrane as a helical span at residues 329–345 (HPGQILGFLIWAVTVQA). Residues 346–364 (DYKLHRFSHPKLNSLWRKR) lie on the Cytoplasmic side of the membrane. Residues 365 to 385 (LYVCVNWAFTQLTVACVVVCV) traverse the membrane as a helical segment. At 386–394 (ELQSLASVK) the chain is on the lumenal side. Residues 395 to 415 (LLWSSCIAVFPLLSALILIIL) traverse the membrane as a helical segment.

Belongs to the membrane-bound acyltransferase family. As to quaternary structure, monomer. Post-translationally, not glycosylated.

It localises to the endoplasmic reticulum membrane. The enzyme catalyses octanoyl-CoA + L-seryl-[protein] = O-octanoyl-L-seryl-[protein] + CoA. It catalyses the reaction decanoyl-CoA + L-seryl-[protein] = O-decanoyl-L-seryl-[protein] + CoA. The catalysed reaction is L-seryl-[protein] + acetyl-CoA = O-acetyl-L-seryl-[protein] + CoA. It carries out the reaction L-seryl-[protein] + butanoyl-CoA = O-butanoyl-L-seryl-[protein] + CoA. The enzyme catalyses pentanoyl-CoA + L-seryl-[protein] = O-pentanoyl-L-seryl-[protein] + CoA. It catalyses the reaction hexanoyl-CoA + L-seryl-[protein] = O-hexanoyl-L-seryl-[protein] + CoA. The catalysed reaction is heptanoyl-CoA + L-seryl-[protein] = O-heptanoyl-L-seryl-[protein] + CoA. It carries out the reaction nonanoyl-CoA + L-seryl-[protein] = O-nonanoyl-L-seryl-[protein] + CoA. The enzyme catalyses L-seryl-[protein] + dodecanoyl-CoA = O-dodecanoyl-L-seryl-[protein] + CoA. It catalyses the reaction L-seryl-[protein] + tetradecanoyl-CoA = O-tetradecanoyl-L-seryl-[protein] + CoA. The catalysed reaction is a fatty acyl-CoA + L-seryl-[protein] = O-fatty acyl-L-seryl-[protein] + CoA. In terms of biological role, catalyzes ghrelin acylation at 'Ser-3' using preferentially octanoyl-CoA, hexanoyl-CoA and decanoyl-CoA as acyl-CoA donors leading to ghrelin activity. In vitro uses also acyl-CoA donors of different lengths from short-chain (C2) to long-chain fatty acids (C16) knowing that acyl-CoA donors from butanoyl-CoA (C4) to dodecanoyl-CoA (C12) are more efficient compared to longer acyl-CoA donors, such as myristoyl-CoA (C14) and palmitoyl-CoA (C16) that are not efficient. This Danio rerio (Zebrafish) protein is Membrane-bound ghrelin O-acyltransferase mboat4.